The sequence spans 231 residues: Floral homeotic protein PMADS 1 (231 aa).

In terms of domain architecture, MADS-box spans 3-58 (RGKIQIKRIENQTNRQVTYSKRRNGLFKKANELTVLCDAKVSIIMISSTGKLHEFI). A K-box domain is found at 84 to 174 (YEKMQEQLRK…LLEFDARQED (91 aa)).

Predominantly expressed in petals and stamens, less in carpels and sepals.

Its subcellular location is the nucleus. Functionally, transcription factor involved in the genetic control of flower development. Necessary for the normal development of petals. Absence of the PMADS1 protein causes transformation of petals into sepals. The protein is Floral homeotic protein PMADS 1 (PMADS1) of Petunia hybrida (Petunia).